The sequence spans 175 residues: Adenine phosphoribosyltransferase (175 aa).

This sequence belongs to the purine/pyrimidine phosphoribosyltransferase family. Homodimer.

It is found in the cytoplasm. It catalyses the reaction AMP + diphosphate = 5-phospho-alpha-D-ribose 1-diphosphate + adenine. It participates in purine metabolism; AMP biosynthesis via salvage pathway; AMP from adenine: step 1/1. Catalyzes a salvage reaction resulting in the formation of AMP, that is energically less costly than de novo synthesis. This Synechococcus sp. (strain CC9902) protein is Adenine phosphoribosyltransferase.